The primary structure comprises 117 residues: Immunoglobulin lambda variable 10-54 (117 aa).

Residues 1–21 form the signal peptide; that stretch reads MPWALLLLTLLTHSAVSVVQA. The interval 20 to 43 is framework-1; sequence QAGLTQPPSVSKGLRQTATLTCTG. The Ig-like domain maps to 22 to 117; that stretch reads GLTQPPSVSK…CSALDSSLSA (96 aa). Cysteine 41 and cysteine 108 are disulfide-bonded. The complementarity-determining-1 stretch occupies residues 44-52; sequence NSNIVGNQG. The interval 53–69 is framework-2; sequence AAWLQQHQGHPPKLLSY. The tract at residues 70-72 is complementarity-determining-2; the sequence is RNN. The segment at 73 to 108 is framework-3; it reads NRPSGISERFSASRSGNTASLTITGLQPEDEADYYC. The complementarity-determining-3 stretch occupies residues 109-117; the sequence is SALDSSLSA.

In terms of assembly, immunoglobulins are composed of two identical heavy chains and two identical light chains; disulfide-linked.

Its subcellular location is the secreted. The protein resides in the cell membrane. Functionally, v region of the variable domain of immunoglobulin light chains that participates in the antigen recognition. Immunoglobulins, also known as antibodies, are membrane-bound or secreted glycoproteins produced by B lymphocytes. In the recognition phase of humoral immunity, the membrane-bound immunoglobulins serve as receptors which, upon binding of a specific antigen, trigger the clonal expansion and differentiation of B lymphocytes into immunoglobulins-secreting plasma cells. Secreted immunoglobulins mediate the effector phase of humoral immunity, which results in the elimination of bound antigens. The antigen binding site is formed by the variable domain of one heavy chain, together with that of its associated light chain. Thus, each immunoglobulin has two antigen binding sites with remarkable affinity for a particular antigen. The variable domains are assembled by a process called V-(D)-J rearrangement and can then be subjected to somatic hypermutations which, after exposure to antigen and selection, allow affinity maturation for a particular antigen. This chain is Immunoglobulin lambda variable 10-54, found in Homo sapiens (Human).